The sequence spans 321 residues: PI-PLC X domain-containing protein 3 (321 aa).

The region spanning 22 to 197 (SIHSIPLTNL…DYQVLVFYHS (176 aa)) is the PI-PLC X-box domain. Catalysis depends on residues His-37 and His-114.

In terms of tissue distribution, widely expressed, with highest levels in brain, followed by heart atrium. Not detected in small intestine, nor stomach.

The protein resides in the cytoplasm. The chain is PI-PLC X domain-containing protein 3 (Plcxd3) from Mus musculus (Mouse).